A 55-amino-acid polypeptide reads, in one-letter code: ATP synthase F(0) complex subunit 8 (55 aa).

A helical transmembrane segment spans residues 7–24; it reads SPWFFIMLTTWLTFSLII.

The protein belongs to the ATPase protein 8 family. In terms of assembly, component of the ATP synthase complex composed at least of ATP5F1A/subunit alpha, ATP5F1B/subunit beta, ATP5MC1/subunit c (homooctomer), MT-ATP6/subunit a, MT-ATP8/subunit 8, ATP5ME/subunit e, ATP5MF/subunit f, ATP5MG/subunit g, ATP5MK/subunit k, ATP5MJ/subunit j, ATP5F1C/subunit gamma, ATP5F1D/subunit delta, ATP5F1E/subunit epsilon, ATP5PF/subunit F6, ATP5PB/subunit b, ATP5PD/subunit d, ATP5PO/subunit OSCP. ATP synthase complex consists of a soluble F(1) head domain (subunits alpha(3) and beta(3)) - the catalytic core - and a membrane F(0) domain - the membrane proton channel (subunits c, a, 8, e, f, g, k and j). These two domains are linked by a central stalk (subunits gamma, delta, and epsilon) rotating inside the F1 region and a stationary peripheral stalk (subunits F6, b, d, and OSCP).

The protein resides in the mitochondrion membrane. Its function is as follows. Subunit 8, of the mitochondrial membrane ATP synthase complex (F(1)F(0) ATP synthase or Complex V) that produces ATP from ADP in the presence of a proton gradient across the membrane which is generated by electron transport complexes of the respiratory chain. ATP synthase complex consist of a soluble F(1) head domain - the catalytic core - and a membrane F(1) domain - the membrane proton channel. These two domains are linked by a central stalk rotating inside the F(1) region and a stationary peripheral stalk. During catalysis, ATP synthesis in the catalytic domain of F(1) is coupled via a rotary mechanism of the central stalk subunits to proton translocation. In vivo, can only synthesize ATP although its ATP hydrolase activity can be activated artificially in vitro. Part of the complex F(0) domain. The sequence is that of ATP synthase F(0) complex subunit 8 from Columbina passerina (Common ground-dove).